Consider the following 370-residue polypeptide: MKRGFSDSPSSSAPPPSSRFKSNPEGDSQFLEDETTKNFARKVADHYSRRTNQTLEEREASPIIHLKKLNNWIKSVLIQLYARPDDAVLDLACGKGGDLIKWDKARIGYYVGIDIAEGSIEDCRTRYNGDADHHQRRKKFSFPSRLLCGDCFEVELDKILEEDAPFDICSCQFAMHYSWTTEARARRALANVSALLRPGGVFIGTMPDANVIIKKLREAEGLEIGNSVYWIRFGEEYSQKKFKSSSPFGIEYVFHLEDAVDCPEWIVPFNVFKSLAEEYDLELVFVKNSHEFVHEYMKKPEFVELMRRLGALGDGSNDQSTLSADEWEAAYLYLSFVLRKRGESDGARRSGRRKNGKMNLSKDDVLYIDS.

Over residues 1-11 (MKRGFSDSPSS) the composition is skewed to low complexity. The interval 1 to 34 (MKRGFSDSPSSSAPPPSSRFKSNPEGDSQFLEDE) is disordered. Residues 61 to 341 (SPIIHLKKLN…LYLSFVLRKR (281 aa)) form the mRNA cap 0 methyltransferase domain. Position 70–71 (70–71 (NN)) interacts with mRNA. S-adenosyl-L-methionine is bound by residues Lys74, Ala92, Asp114, 150–151 (DC), and 172–174 (QFA).

The protein belongs to the class I-like SAM-binding methyltransferase superfamily. mRNA cap 0 methyltransferase family.

It localises to the nucleus. The catalysed reaction is a 5'-end (5'-triphosphoguanosine)-ribonucleoside in mRNA + S-adenosyl-L-methionine = a 5'-end (N(7)-methyl 5'-triphosphoguanosine)-ribonucleoside in mRNA + S-adenosyl-L-homocysteine. Functionally, mRNA-capping methyltransferase that methylates the N7 position of the added guanosine to the 5'-cap structure of mRNAs. Binds RNA containing 5'-terminal GpppC. The sequence is that of mRNA cap guanine-N(7) methyltransferase 1 from Arabidopsis thaliana (Mouse-ear cress).